Here is a 56-residue protein sequence, read N- to C-terminus: Keratin-associated protein 20-1 (56 aa).

Belongs to the KRTAP type 20 family. In terms of assembly, interacts with hair keratins.

Functionally, in the hair cortex, hair keratin intermediate filaments are embedded in an interfilamentous matrix, consisting of hair keratin-associated proteins (KRTAP), which are essential for the formation of a rigid and resistant hair shaft through their extensive disulfide bond cross-linking with abundant cysteine residues of hair keratins. The matrix proteins include the high-sulfur and high-glycine-tyrosine keratins. In Homo sapiens (Human), this protein is Keratin-associated protein 20-1 (KRTAP20-1).